Consider the following 101-residue polypeptide: Gamma-secretase subunit PEN-2 (101 aa).

The Cytoplasmic portion of the chain corresponds to 1–17 (MNLERVSNEEKLNLCRK). An intramembrane region (helical) is located at residues 18–36 (YYLGGFAFLPFLWLVNIFW). At 37-57 (FFREAFLVPAYTEQSQIKGYV) the chain is on the cytoplasmic side. Residues 58–78 (WRSAVGFLFWVIVLTSWITIF) traverse the membrane as a helical segment. Over 79-101 (QIYRPRWGALGDYLSFTIPLGTP) the chain is Lumenal.

It belongs to the PEN-2 family. In terms of assembly, the functional gamma-secretase complex is composed of at least four polypeptides: a presenilin homodimer (PSEN1 or PSEN2), nicastrin (NCSTN), APH1 (APH1A or APH1B) and PSENEN. In terms of tissue distribution, widely expressed. Expressed in leukocytes, lung, placenta, small intestine, liver, kidney, spleen thymus, skeletal muscle, heart and brain.

Its subcellular location is the endoplasmic reticulum membrane. The protein localises to the golgi apparatus. The protein resides in the golgi stack membrane. It is found in the cell membrane. It localises to the membrane. Its function is as follows. Essential subunit of the gamma-secretase complex, an endoprotease complex that catalyzes the intramembrane cleavage of integral membrane proteins such as Notch receptors and APP (amyloid-beta precursor protein). The gamma-secretase complex plays a role in Notch and Wnt signaling cascades and regulation of downstream processes via its role in processing key regulatory proteins, and by regulating cytosolic CTNNB1 levels. PSENEN modulates both endoproteolysis of presenilin and gamma-secretase activity. This chain is Gamma-secretase subunit PEN-2 (PSENEN), found in Homo sapiens (Human).